Here is a 778-residue protein sequence, read N- to C-terminus: Endonuclease MutS2 (778 aa).

Position 328–335 (328–335 (GPNTGGKT)) interacts with ATP. In terms of domain architecture, Smr spans 702-777 (LDLRGKRYEE…GSGATIVTFK (76 aa)).

Belongs to the DNA mismatch repair MutS family. MutS2 subfamily. In terms of assembly, homodimer. Binds to stalled ribosomes, contacting rRNA.

Its function is as follows. Endonuclease that is involved in the suppression of homologous recombination and thus may have a key role in the control of bacterial genetic diversity. In terms of biological role, acts as a ribosome collision sensor, splitting the ribosome into its 2 subunits. Detects stalled/collided 70S ribosomes which it binds and splits by an ATP-hydrolysis driven conformational change. Acts upstream of the ribosome quality control system (RQC), a ribosome-associated complex that mediates the extraction of incompletely synthesized nascent chains from stalled ribosomes and their subsequent degradation. Probably generates substrates for RQC. In Streptococcus pneumoniae (strain 70585), this protein is Endonuclease MutS2.